The following is a 692-amino-acid chain: MAIERITDNKFELVSKYEPAGDQGEAIAELVDNIENGEKAQILRGATGTGKTYTMSQVIARTGKPTLVMAHNKTLAGQLYSEFKEFFPNNAVEYFVSYYDYYQPEAYVPSSDTYIEKDSSVNDEIDKLRHSATSSLLERNDVIVVASVSCIYGLGSPKEYQDSVVSLRPGQEISRDQLLNDLVGIQFERNDIDFQRGCFRVRGDVVEVFPASRDEHAFRVEFFGDEIDRIREIEVLTGQVLGEVDHLAIFPATHFMTNDDRMEESIAKIEAELEEQLKVFRSEGKLLEAQRLEQRTNYDIEMLREMGYCNGVENYSRHMDGREEGEPPYTLLDFFPDDFMIMIDESHMTMGQVKGMYNGDRARKEMLCNYGFRLPSALDNRPLKREEFESHVHQIVYVSATPGDYEMEQTDTIVEQIIRPTGLLDPVVEVRPMMGQIDDLVGEIHKRAEKNERVFVTTLTKKMSEDLTAYFKEMGIKVKYMHSDIKTLERTEIIRDLRLGVFDVLVGINLLREGIDVPEVSLVAILDADKEGFLRNERGLIQTIGRAARNSEGHVILYSDMAKALDENDPVDKEILDSGYYTEYEGQKYKITRSMKHAMDETARRREIQMAYNEEHGITPQTIKKEIRDLIAITKKTDSGEIEEVDASAMTKKERKALVKKLEKEMQQAASALDFEGAAQLRDMVLELRAMD.

Residues 32–418 (DNIENGEKAQ…QTDTIVEQII (387 aa)) enclose the Helicase ATP-binding domain. An ATP-binding site is contributed by 45–52 (GATGTGKT). Positions 98–121 (YYDYYQPEAYVPSSDTYIEKDSSV) match the Beta-hairpin motif. The 196-residue stretch at 436 to 631 (QIDDLVGEIH…TIKKEIRDLI (196 aa)) folds into the Helicase C-terminal domain. Residues 656–691 (KALVKKLEKEMQQAASALDFEGAAQLRDMVLELRAM) enclose the UVR domain.

Belongs to the UvrB family. In terms of assembly, forms a heterotetramer with UvrA during the search for lesions. Interacts with UvrC in an incision complex.

It localises to the cytoplasm. Its function is as follows. The UvrABC repair system catalyzes the recognition and processing of DNA lesions. A damage recognition complex composed of 2 UvrA and 2 UvrB subunits scans DNA for abnormalities. Upon binding of the UvrA(2)B(2) complex to a putative damaged site, the DNA wraps around one UvrB monomer. DNA wrap is dependent on ATP binding by UvrB and probably causes local melting of the DNA helix, facilitating insertion of UvrB beta-hairpin between the DNA strands. Then UvrB probes one DNA strand for the presence of a lesion. If a lesion is found the UvrA subunits dissociate and the UvrB-DNA preincision complex is formed. This complex is subsequently bound by UvrC and the second UvrB is released. If no lesion is found, the DNA wraps around the other UvrB subunit that will check the other stand for damage. This is UvrABC system protein B from Lactococcus lactis subsp. lactis (strain IL1403) (Streptococcus lactis).